The sequence spans 224 residues: UPF0758 protein Sde_3678 (224 aa).

Residues 102–224 enclose the MPN domain; the sequence is SLTSTTAVKQ…AVSFAERGWI (123 aa). Residues H173, H175, and D186 each coordinate Zn(2+). A JAMM motif motif is present at residues 173 to 186; the sequence is HNHPSGIAEPSEPD.

The protein belongs to the UPF0758 family.

In Saccharophagus degradans (strain 2-40 / ATCC 43961 / DSM 17024), this protein is UPF0758 protein Sde_3678.